Consider the following 124-residue polypeptide: MNNILFVALGGSIGAVFRYLISIFMVQLFGSAFPFGTLLVNIIGSFLMGVIYALGQVSEVSPEIKALVGVGLLGALTTFSTFSNETLLLIQSGAWLKAFLNIALNLCLCIFMVYLGQQLVFSRI.

Transmembrane regions (helical) follow at residues 4–24 (ILFV…ISIF), 35–55 (FGTL…YALG), 70–90 (VGLL…LLLI), and 95–115 (WLKA…MVYL). Na(+) is bound by residues Gly-74 and Thr-77.

It belongs to the fluoride channel Fluc/FEX (TC 1.A.43) family.

Its subcellular location is the cell inner membrane. It catalyses the reaction fluoride(in) = fluoride(out). Its activity is regulated as follows. Na(+) is not transported, but it plays an essential structural role and its presence is essential for fluoride channel function. In terms of biological role, fluoride-specific ion channel. Important for reducing fluoride concentration in the cell, thus reducing its toxicity. This chain is Fluoride-specific ion channel FluC, found in Shewanella woodyi (strain ATCC 51908 / MS32).